The sequence spans 133 residues: Holo-[acyl-carrier-protein] synthase (133 aa).

Positions 8 and 56 each coordinate Mg(2+).

The protein belongs to the P-Pant transferase superfamily. AcpS family. The cofactor is Mg(2+).

The protein localises to the cytoplasm. The enzyme catalyses apo-[ACP] + CoA = holo-[ACP] + adenosine 3',5'-bisphosphate + H(+). Its function is as follows. Transfers the 4'-phosphopantetheine moiety from coenzyme A to a Ser of acyl-carrier-protein. This is Holo-[acyl-carrier-protein] synthase from Clostridium perfringens (strain SM101 / Type A).